A 240-amino-acid polypeptide reads, in one-letter code: UDP-2,3-diacylglucosamine hydrolase (240 aa).

The Mn(2+) site is built by D8, H10, D41, N79, and H114. 79-80 (NR) provides a ligand contact to substrate. Substrate-binding residues include D122, S160, N164, K167, and H195. Residues H195 and H197 each contribute to the Mn(2+) site.

Belongs to the LpxH family. Requires Mn(2+) as cofactor.

The protein localises to the cell inner membrane. The catalysed reaction is UDP-2-N,3-O-bis[(3R)-3-hydroxytetradecanoyl]-alpha-D-glucosamine + H2O = 2-N,3-O-bis[(3R)-3-hydroxytetradecanoyl]-alpha-D-glucosaminyl 1-phosphate + UMP + 2 H(+). It participates in glycolipid biosynthesis; lipid IV(A) biosynthesis; lipid IV(A) from (3R)-3-hydroxytetradecanoyl-[acyl-carrier-protein] and UDP-N-acetyl-alpha-D-glucosamine: step 4/6. Its function is as follows. Hydrolyzes the pyrophosphate bond of UDP-2,3-diacylglucosamine to yield 2,3-diacylglucosamine 1-phosphate (lipid X) and UMP by catalyzing the attack of water at the alpha-P atom. Involved in the biosynthesis of lipid A, a phosphorylated glycolipid that anchors the lipopolysaccharide to the outer membrane of the cell. The sequence is that of UDP-2,3-diacylglucosamine hydrolase from Salmonella newport (strain SL254).